We begin with the raw amino-acid sequence, 183 residues long: Dual-action ribosomal maturation protein DarP (183 aa).

Residues 1–20 (MKQKYEDWLNDVPDNQEDDE) form a disordered region.

The protein belongs to the DarP family.

It localises to the cytoplasm. Functionally, member of a network of 50S ribosomal subunit biogenesis factors which assembles along the 30S-50S interface, preventing incorrect 23S rRNA structures from forming. Promotes peptidyl transferase center (PTC) maturation. The polypeptide is Dual-action ribosomal maturation protein DarP (Pectobacterium carotovorum subsp. carotovorum (strain PC1)).